Here is a 178-residue protein sequence, read N- to C-terminus: MTHKSVRDYIRTIVDFPHEGILFRDVTTLFADPRGFRIAIDQLLAPYAGMRFDKVAGLEARGFILGGAVAHQLSTGFVPIRKKGKLPGRTISVSYQLEYGEAVVEVHDDAIQAGEKVLLVDDLLATGGTAEAGIKLIEQLGDQVVGCAFVVDLPDLGGRRRLEAMGMEVHALCAFEGL.

It belongs to the purine/pyrimidine phosphoribosyltransferase family. In terms of assembly, homodimer.

Its subcellular location is the cytoplasm. It catalyses the reaction AMP + diphosphate = 5-phospho-alpha-D-ribose 1-diphosphate + adenine. Its pathway is purine metabolism; AMP biosynthesis via salvage pathway; AMP from adenine: step 1/1. In terms of biological role, catalyzes a salvage reaction resulting in the formation of AMP, that is energically less costly than de novo synthesis. This chain is Adenine phosphoribosyltransferase, found in Cereibacter sphaeroides (strain ATCC 17029 / ATH 2.4.9) (Rhodobacter sphaeroides).